Consider the following 502-residue polypeptide: MFRQAKWDEPLIFELSREGRVGYTLPKPIEDLEVEIPEKIRRKSKLDLPELSEPEIVKHYTRLSEMNYGVDSGIYPLGSCTMKYNPKINEEMAAHPGVAYIHPYQDERTVQGALKIMWELEQWLKEITGMDRFTLQPAAGANGEFTGVSIIRTYHIDNGEPQRDEMLVPDSAHGTNPASAAMAGFKVIEIPSNENGTVDLEALENAVGERTAGLMLTNPNTLGIFEDEILEIAKIVHKAGGLLYYDGANLNAVLGKVRPGDMGFDIVHLNLHKTFSTPHGGGGPGSGPVGVKDFLKDYLPVPLVGYDEENDRYYLDYNVPKSIGKVKELYGNFAVMVRALVYLKVMGRDGLKNASEIAVLNANYLTRKLLGTRGYELPGKKLRKHETVFSAEPMKKETGVTAMDVAKRLLDFGMHAPTVYFPLIVHEALMIEPTETVSKEELDAYVEALKRISDEAYTNPEVVKSAPHNTAVRRVDDVMAVKKPVISWRMYLELKEKGEINY.

At lysine 273 the chain carries N6-(pyridoxal phosphate)lysine.

It belongs to the GcvP family. C-terminal subunit subfamily. The glycine cleavage system is composed of four proteins: P, T, L and H. In this organism, the P 'protein' is a heterodimer of two subunits. The cofactor is pyridoxal 5'-phosphate.

It carries out the reaction N(6)-[(R)-lipoyl]-L-lysyl-[glycine-cleavage complex H protein] + glycine + H(+) = N(6)-[(R)-S(8)-aminomethyldihydrolipoyl]-L-lysyl-[glycine-cleavage complex H protein] + CO2. The glycine cleavage system catalyzes the degradation of glycine. The P protein binds the alpha-amino group of glycine through its pyridoxal phosphate cofactor; CO(2) is released and the remaining methylamine moiety is then transferred to the lipoamide cofactor of the H protein. In Thermococcus gammatolerans (strain DSM 15229 / JCM 11827 / EJ3), this protein is Probable glycine dehydrogenase (decarboxylating) subunit 2.